A 485-amino-acid chain; its full sequence is Glutamyl-tRNA(Gln) amidotransferase subunit A (485 aa).

Residues K78 and S153 each act as charge relay system in the active site. S177 functions as the Acyl-ester intermediate in the catalytic mechanism.

Belongs to the amidase family. GatA subfamily. As to quaternary structure, heterotrimer of A, B and C subunits.

It catalyses the reaction L-glutamyl-tRNA(Gln) + L-glutamine + ATP + H2O = L-glutaminyl-tRNA(Gln) + L-glutamate + ADP + phosphate + H(+). Allows the formation of correctly charged Gln-tRNA(Gln) through the transamidation of misacylated Glu-tRNA(Gln) in organisms which lack glutaminyl-tRNA synthetase. The reaction takes place in the presence of glutamine and ATP through an activated gamma-phospho-Glu-tRNA(Gln). The polypeptide is Glutamyl-tRNA(Gln) amidotransferase subunit A (Lawsonia intracellularis (strain PHE/MN1-00)).